Here is a 420-residue protein sequence, read N- to C-terminus: Dachshund homolog dac-1 (420 aa).

Positions 23–77 (PSSSSSSSNNSSSNTSSSNFLSPYEYQESSTSPRDTTDSSGESSLSSSGSSSSLN) are disordered. Low complexity-rich tracts occupy residues 24–41 (SSSS…SSSN) and 51–77 (SSTS…SSLN). A DACHbox-N region spans residues 85–171 (KLIKFRGHNV…LLKTSDFEKL (87 aa)). The segment covering 242–258 (NSFERADDDDQNQRDAD) has biased composition (basic and acidic residues). Residues 242-321 (NSFERADDDD…SSSSSGKNDE (80 aa)) form a disordered region. Positions 263–273 (LNLSKSGGNSE) are enriched in polar residues. Residues 297–317 (GGSNSNSLSMSMEAGSSSSSG) show a composition bias toward low complexity.

It belongs to the DACH/dachshund family. As to expression, expressed in AFD, AWC, ASE and ASK neurons. Expressed in the alae.

It localises to the nucleus. In terms of biological role, transcription factor. Plays a role in the thermotactic response. The chain is Dachshund homolog dac-1 from Caenorhabditis elegans.